The sequence spans 551 residues: Sialic acid-binding Ig-like lectin 5 (551 aa).

Positions 1–16 (MLPLLLLPLLWGGSLQ) are cleaved as a signal peptide. Topologically, residues 17-441 (EKPVYELQVQ…LGTGVVPAAL (425 aa)) are extracellular. Residues 19-136 (PVYELQVQKS…KYSYQQNKLN (118 aa)) form the Ig-like V-type domain. Intrachain disulfides connect Cys-36–Cys-170, Cys-41–Cys-101, and Cys-164–Cys-213. N-linked (GlcNAc...) asparagine glycosylation occurs at Asn-100. The N-acetylneuraminate site is built by Arg-119, Lys-127, and Ser-129. Positions 146–229 (PDIHFLEPLE…AQVTTERTVQ (84 aa)) constitute an Ig-like C2-type 1 domain. A disordered region spans residues 189-210 (DPETTRSSELTLTPRPEDHGTN). N-linked (GlcNAc...) asparagine glycans are attached at residues Asn-210, Asn-231, and Asn-253. An Ig-like C2-type 2 domain is found at 236-330 (PQTITIFRNG…GFLQIFLNLS (95 aa)). A disulfide bridge connects residues Cys-269 and Cys-314. N-linked (GlcNAc...) asparagine glycans are attached at residues Asn-328, Asn-375, Asn-384, and Asn-393. A helical membrane pass occupies residues 442-462 (GGAGVMALLCICLCLIFFLIV). The Cytoplasmic segment spans residues 463–551 (KARRKQAAGR…TEYSEIKTSK (89 aa)). The interval 469-551 (AAGRPEKMDD…TEYSEIKTSK (83 aa)) is disordered. Residues 518–523 (LHYASL) carry the ITIM motif motif. The segment covering 528–537 (MKSREPKDQE) has biased composition (basic and acidic residues). Residues 542 to 547 (TEYSEI) carry the SLAM-like motif motif.

This sequence belongs to the immunoglobulin superfamily. SIGLEC (sialic acid binding Ig-like lectin) family. Expressed by monocytic/myeloid lineage cells. Found at high levels in peripheral blood leukocytes, spleen, bone marrow and at lower levels in lymph node, lung, appendix, placenta, pancreas and thymus. Expressed by monocytes and neutrophils but absent from leukemic cell lines representing early stages of myelomonocytic differentiation.

The protein localises to the membrane. Functionally, putative adhesion molecule that mediates sialic-acid dependent binding to cells. Binds equally to alpha-2,3-linked and alpha-2,6-linked sialic acid. The sialic acid recognition site may be masked by cis interactions with sialic acids on the same cell surface. The polypeptide is Sialic acid-binding Ig-like lectin 5 (SIGLEC5) (Homo sapiens (Human)).